The sequence spans 1645 residues: Cortactin-binding protein 2 (1645 aa).

Disordered regions lie at residues 1–28 (MATDGASCEPDFSRAPEDAEGATAEAAK), 269–293 (LKRGNDSKPSLSLPRKTKDRRSVSI), 366–435 (IVSS…AALH), 451–478 (GNANDPDQNGNTTQSPPSRDVSPTSRDS), and 492–612 (ALSR…PPKP). The stretch at 119-276 (RKMQERMSTQ…EQLKRGNDSK (158 aa)) forms a coiled coil. Composition is skewed to polar residues over residues 407–417 (QTPTIAPQSHA) and 451–477 (GNANDPDQNGNTTQSPPSRDVSPTSRD). R495 carries the asymmetric dimethylarginine modification. A compositionally biased stretch (polar residues) spans 580 to 590 (TMASPPSTLPQ). 6 ANK repeats span residues 706–736 (GRPTLLQQAAAQGNVTLLSMLLNEEGLDINY), 740–769 (DGHSALYSAAKNGHTDCVRLLLNAEAQVNA), 773–802 (NGFTPLCAAAAQGHFKCVELLIAYNANINH), 806–835 (EGQTPLYLACKNGNKECIKHLLEAGTDRSV), 839–868 (DGWTPVHAAVDAGNVDSLKLLMYHRAPARR), and 909–939 (EGWTAAHIAASKGFKDCLEILCKHRGLEPER). The tract at residues 868–898 (RNSLHEEEPESGVFDLDQGEESPEGTSKPVI) is disordered. The interval 1442 to 1479 (CSRKKGESGAWRKVSTSPRKKSGRFSPPSWSKPGPSEE) is disordered. S1521 carries the post-translational modification Phosphoserine. The tract at residues 1551–1645 (DDLRSFDSPG…EINNNSKEEI (95 aa)) is disordered. 2 stretches are compositionally biased toward polar residues: residues 1558–1569 (SPGNSPAFSATV) and 1582–1597 (PFSSHQPTECSNSQSK). Positions 1620 to 1634 (SQNTKRSSSSSNTRQ) are enriched in low complexity. Residues 1635–1645 (IEINNNSKEEI) are compositionally biased toward polar residues.

As to quaternary structure, interacts with CTTN/cortactin SH3 domain. Interacts with STRN, STRN4/zinedin and MOB4/phocein; this interactions mediate the association with the STRIPAK core complex and may regulate dendritic spine distribution of the STRIPAK complex in hippocampal neurons. Activation of glutamate receptors weakens the interaction with STRN and STRN4.

The protein localises to the cytoplasm. It localises to the cell cortex. The protein resides in the cell projection. Its subcellular location is the dendritic spine. In terms of biological role, regulates the dendritic spine distribution of CTTN/cortactin in hippocampal neurons, and thus controls dendritic spinogenesis and dendritic spine maintenance. Associates with the striatin-interacting phosphatase and kinase (STRIPAK) core complex to regulate dendritic spine distribution of the STRIPAK complex in hippocampal neurons. In Mustela putorius furo (European domestic ferret), this protein is Cortactin-binding protein 2 (CTTNBP2).